The following is a 541-amino-acid chain: Chaperonin GroEL 2 (541 aa).

ATP-binding positions include 30–33 (TLGP), lysine 51, 87–91 (DGTTT), glycine 415, and aspartate 496.

It belongs to the chaperonin (HSP60) family. Forms a cylinder of 14 subunits composed of two heptameric rings stacked back-to-back. Interacts with the co-chaperonin GroES.

It is found in the cytoplasm. It catalyses the reaction ATP + H2O + a folded polypeptide = ADP + phosphate + an unfolded polypeptide.. Functionally, together with its co-chaperonin GroES, plays an essential role in assisting protein folding. The GroEL-GroES system forms a nano-cage that allows encapsulation of the non-native substrate proteins and provides a physical environment optimized to promote and accelerate protein folding. This chain is Chaperonin GroEL 2, found in Bradyrhizobium sp. (strain BTAi1 / ATCC BAA-1182).